The chain runs to 133 residues: NADPH-dependent 7-cyano-7-deazaguanine reductase (133 aa).

The Thioimide intermediate role is filled by C48. The active-site Proton donor is the D55. Substrate-binding positions include 70–72 (VEL) and 89–90 (QE).

This sequence belongs to the GTP cyclohydrolase I family. QueF type 1 subfamily.

Its subcellular location is the cytoplasm. The enzyme catalyses 7-aminomethyl-7-carbaguanine + 2 NADP(+) = 7-cyano-7-deazaguanine + 2 NADPH + 3 H(+). Its pathway is tRNA modification; tRNA-queuosine biosynthesis. Functionally, catalyzes the NADPH-dependent reduction of 7-cyano-7-deazaguanine (preQ0) to 7-aminomethyl-7-deazaguanine (preQ1). In Thermoanaerobacter pseudethanolicus (strain ATCC 33223 / 39E) (Clostridium thermohydrosulfuricum), this protein is NADPH-dependent 7-cyano-7-deazaguanine reductase.